The primary structure comprises 827 residues: MELSRRDFMKANAAVAAAAAAGIVLPVKNVQADDSGIKWDKAPCRFCGTGCSVLVGTKDGRVVATQGDPDAEVNRGLNCIKGYFLSKIMYGADRVQTPLLRMKDGKFHKEGDFTPVSWDQAFSIMAEKVKATLKAKGGNAVGMFSSGQTTIFEGYAKVKLWKAGLRSNTIDPNARHCMASAAVAFLRTFGMDEPMGCYNDIEKTDGFVLWGSNMAEMHPILWSRISDRRLSDNNVKVVVMSTFEHRSFELADTPIIFKPHSDLAILNYIANYIIQNDKVNWDFVNKHTKFKRGETDIGYGLRPEHPLQKAAKNVKNAGKMHDSSFEEFKKIVEPYTLEKAHEISGVPKHQLEALAKMYADPAQKLVSFWTMGFNQHTRGVWVNHMIYNVHLLTGKISTPGCGPFSLTGQPSACGTAREVGTFVHRLPADMVVMNPKHVEICEKAWKLPKGTIPTVPGYAAVMQSRMLKDGKLNFLWQMCTNNMQGGPNINEEIFPGWRNPENFIVVSDPYPSVSAVAADLILPTCMWVEKEGAYGNAERRTQFWYQQVKGPAQSKSDLWQIVEFAKYFKAEEVWNEELMAQMPEYRGKTLYEILYLNGEVDKYQVPTNIPGYLNDEADDFGFYIQKGLFEEYAQFGRGHGHDLADFETYHQARGLRWPVVDGKETLWRYREGFDPYVKAGEDFRFYGYPDGKAIILGVPYESPAESPDEEYDLWLSTGRVLEHWHTGTMTRRVPELHRSFPNNLVWMHPSDAKKRGLRHGDKVKVITRRGEMISHLDTRGRNKCPEGLIFTTFFDAGQLANKLTLDATDPISGETDFKKCAAKVVKA.

The segment at residues 1 to 32 is a signal peptide (tat-type signal); sequence MELSRRDFMKANAAVAAAAAAGIVLPVKNVQA. Residues 37–93 enclose the 4Fe-4S Mo/W bis-MGD-type domain; it reads IKWDKAPCRFCGTGCSVLVGTKDGRVVATQGDPDAEVNRGLNCIKGYFLSKIMYGAD. 4 residues coordinate [4Fe-4S] cluster: Cys-44, Cys-47, Cys-51, and Cys-79. Mo-bis(molybdopterin guanine dinucleotide) is bound by residues Lys-81, Gln-148, Asn-173, Cys-177, 210–217, 241–245, Met-371, Gln-375, Asn-481, 507–508, Lys-530, Asp-557, and 717–726; these read WGSNMAEM, STFEH, SD, and TGRVLEHWHT. Residue Phe-793 participates in substrate binding. Residues Asn-801 and Lys-818 each contribute to the Mo-bis(molybdopterin guanine dinucleotide) site.

Belongs to the prokaryotic molybdopterin-containing oxidoreductase family. NasA/NapA/NarB subfamily. In terms of assembly, component of the periplasmic nitrate reductase NapAB complex composed of NapA and NapB. It depends on [4Fe-4S] cluster as a cofactor. Mo-bis(molybdopterin guanine dinucleotide) serves as cofactor. Post-translationally, predicted to be exported by the Tat system. The position of the signal peptide cleavage has not been experimentally proven.

The protein resides in the periplasm. It carries out the reaction 2 Fe(II)-[cytochrome] + nitrate + 2 H(+) = 2 Fe(III)-[cytochrome] + nitrite + H2O. Catalytic subunit of the periplasmic nitrate reductase complex NapAB. Receives electrons from NapB and catalyzes the reduction of nitrate to nitrite. The chain is Periplasmic nitrate reductase from Haemophilus ducreyi (strain 35000HP / ATCC 700724).